The following is a 225-amino-acid chain: MARSIIAVLPAAGVGSRMQADKPKQYLTLLGKTLLEHTLDVMLSYPAVSKIILAVSKDDPYISTLSLDPKIQLVEGGTTRAESVLNGLNAIAEKNAWVLVHDAARPCLQHADIDKLLAIEDKQGAILAIPVTDTIKRADNQQCIVKTEDRSQLWQAMTPQFFPVDILRDALSTGIQQGANITDEASAIELAGFRPHLVAGRSDNLKVTRPEDLALAEFYLTRNKL.

This sequence belongs to the IspD/TarI cytidylyltransferase family. IspD subfamily.

It carries out the reaction 2-C-methyl-D-erythritol 4-phosphate + CTP + H(+) = 4-CDP-2-C-methyl-D-erythritol + diphosphate. It functions in the pathway isoprenoid biosynthesis; isopentenyl diphosphate biosynthesis via DXP pathway; isopentenyl diphosphate from 1-deoxy-D-xylulose 5-phosphate: step 2/6. Its function is as follows. Catalyzes the formation of 4-diphosphocytidyl-2-C-methyl-D-erythritol from CTP and 2-C-methyl-D-erythritol 4-phosphate (MEP). This chain is 2-C-methyl-D-erythritol 4-phosphate cytidylyltransferase, found in Haemophilus influenzae (strain PittGG).